Consider the following 310-residue polypeptide: MPVSTTLLQSDLPGLPLRHRGKVRDVFDIPRDRLPADAPPGDYLLMVATDRLSAFDVVLPDPIPGKGEMLCQVSNFWFHKTEHLMPNHLVDIRVEQVLPEGVDPALYAKRAVVTRKLKPVPVEAIARGYLIGSGWKDYQRTGKISGIELPDGLRQAEKLPEPIFTPSTKAAVGDHDENIDFDAMVKTVGAELAERVRDATLRIYRFAADFAAERGILLADTKFEFGTDADGRLYIMDEMLTPDSSRYWPADQYELGTSPPSYDKQFVRDYLETLDWGKTAPGPRLPADVIERTRAKYAEALQRLAGISVD.

Belongs to the SAICAR synthetase family.

It catalyses the reaction 5-amino-1-(5-phospho-D-ribosyl)imidazole-4-carboxylate + L-aspartate + ATP = (2S)-2-[5-amino-1-(5-phospho-beta-D-ribosyl)imidazole-4-carboxamido]succinate + ADP + phosphate + 2 H(+). The protein operates within purine metabolism; IMP biosynthesis via de novo pathway; 5-amino-1-(5-phospho-D-ribosyl)imidazole-4-carboxamide from 5-amino-1-(5-phospho-D-ribosyl)imidazole-4-carboxylate: step 1/2. This is Phosphoribosylaminoimidazole-succinocarboxamide synthase from Xanthomonas campestris pv. campestris (strain B100).